The chain runs to 605 residues: Leucine-rich repeat-containing protein 40 (605 aa).

Residues 1–26 (MSRFRRGGKAPDPLSGFRAPKEQEPA) are disordered. LRR repeat units lie at residues 83–104 (DLTK…ISLL), 106–127 (ALVV…IKEL), 129–151 (NLQK…QHLQ), 152–173 (NLKS…IGHL), 175–196 (ILEE…VGQL), 198–219 (GLVK…IGKM), 221–242 (NLKQ…VAGM), 244–265 (SLEQ…PFLT), 266–287 (KLKE…HLQN), 290–311 (SLSV…ISLL), 313–335 (GLER…GSLP), 336–357 (NLKS…ILNK), 429–450 (FITT…IVEM), 453–475 (SVCD…CMLL), 476–497 (KLTH…MEAM), 499–520 (RLQS…LYRI), 522–543 (TLET…QLIK), 546–567 (KLST…LGNC), and 569–590 (SLRA…ILAK).

This chain is Leucine-rich repeat-containing protein 40 (lrrc40), found in Xenopus tropicalis (Western clawed frog).